A 93-amino-acid chain; its full sequence is Large ribosomal subunit protein bL31B (93 aa).

Belongs to the bacterial ribosomal protein bL31 family. Type B subfamily. As to quaternary structure, part of the 50S ribosomal subunit.

This Pseudomonas syringae pv. syringae (strain B728a) protein is Large ribosomal subunit protein bL31B.